The sequence spans 237 residues: Small ribosomal subunit protein uS5 (237 aa).

Residues 1–59 (MADETNLEGVAAVEATGGEPQREGRGRGRGRGGNDRGGERGGRGRRDDRRGRGNNDEEG) form a disordered region. Residues 20–55 (PQREGRGRGRGRGGNDRGGERGGRGRRDDRRGRGNN) show a composition bias toward basic and acidic residues. Residues 63-126 (LIEKLVHINR…AAAKRAMVRV (64 aa)) enclose the S5 DRBM domain.

This sequence belongs to the universal ribosomal protein uS5 family. Part of the 30S ribosomal subunit. Contacts proteins S4 and S8.

Its function is as follows. With S4 and S12 plays an important role in translational accuracy. In terms of biological role, located at the back of the 30S subunit body where it stabilizes the conformation of the head with respect to the body. The protein is Small ribosomal subunit protein uS5 of Novosphingobium aromaticivorans (strain ATCC 700278 / DSM 12444 / CCUG 56034 / CIP 105152 / NBRC 16084 / F199).